A 260-amino-acid polypeptide reads, in one-letter code: Flavin-dependent thymidylate synthase (260 aa).

The region spanning methionine 1–asparagine 202 is the ThyX domain. FAD-binding positions include serine 55, arginine 79 to arginine 81, and glutamine 87. Residues glutamine 76–arginine 79, glutamine 87–arginine 91, and arginine 141 contribute to the dUMP site. The ThyX motif signature appears at arginine 79–serine 89. FAD is bound by residues asparagine 157–arginine 159 and asparagine 163. Arginine 168 contributes to the dUMP binding site. The active-site Involved in ionization of N3 of dUMP, leading to its activation is the arginine 168.

Belongs to the thymidylate synthase ThyX family. Homotetramer. The cofactor is FAD.

It catalyses the reaction dUMP + (6R)-5,10-methylene-5,6,7,8-tetrahydrofolate + NADPH + H(+) = dTMP + (6S)-5,6,7,8-tetrahydrofolate + NADP(+). Its pathway is pyrimidine metabolism; dTTP biosynthesis. Functionally, catalyzes the reductive methylation of 2'-deoxyuridine-5'-monophosphate (dUMP) to 2'-deoxythymidine-5'-monophosphate (dTMP) while utilizing 5,10-methylenetetrahydrofolate (mTHF) as the methyl donor, and NADPH and FADH(2) as the reductant. This Sulfolobus acidocaldarius (strain ATCC 33909 / DSM 639 / JCM 8929 / NBRC 15157 / NCIMB 11770) protein is Flavin-dependent thymidylate synthase.